A 316-amino-acid polypeptide reads, in one-letter code: Putative metal-binding protein TP_0034 (316 aa).

The first 19 residues, 1–19 (MQRCSVVAALAGVVFLAQA), serve as a signal peptide directing secretion. H68, H146, and H210 together coordinate a divalent metal cation.

Belongs to the bacterial solute-binding protein 9 family.

The protein localises to the periplasm. Functionally, part of an ATP-binding cassette (ABC) transport system involved in metal import. Binds a metal with high affinity and specificity and delivers it to the membrane permease for translocation into the cytoplasm. The polypeptide is Putative metal-binding protein TP_0034 (Treponema pallidum (strain Nichols)).